Reading from the N-terminus, the 460-residue chain is Kynurenine 3-monooxygenase (460 aa).

Belongs to the aromatic-ring hydroxylase family. KMO subfamily. The cofactor is FAD.

The protein resides in the mitochondrion. The enzyme catalyses L-kynurenine + NADPH + O2 + H(+) = 3-hydroxy-L-kynurenine + NADP(+) + H2O. The protein operates within cofactor biosynthesis; NAD(+) biosynthesis; quinolinate from L-kynurenine: step 1/3. Catalyzes the hydroxylation of L-kynurenine (L-Kyn) to form 3-hydroxy-L-kynurenine (L-3OHKyn). Required for synthesis of quinolinic acid. The polypeptide is Kynurenine 3-monooxygenase (Dictyostelium discoideum (Social amoeba)).